A 317-amino-acid polypeptide reads, in one-letter code: Beta-ketoacyl-[acyl-carrier-protein] synthase III (317 aa).

Residues Cys-112 and His-244 contribute to the active site. The segment at 245 to 249 is ACP-binding; that stretch reads QANLR. Residue Asn-274 is part of the active site.

This sequence belongs to the thiolase-like superfamily. FabH family. As to quaternary structure, homodimer.

It localises to the cytoplasm. It catalyses the reaction malonyl-[ACP] + acetyl-CoA + H(+) = 3-oxobutanoyl-[ACP] + CO2 + CoA. It participates in lipid metabolism; fatty acid biosynthesis. Catalyzes the condensation reaction of fatty acid synthesis by the addition to an acyl acceptor of two carbons from malonyl-ACP. Catalyzes the first condensation reaction which initiates fatty acid synthesis and may therefore play a role in governing the total rate of fatty acid production. Possesses both acetoacetyl-ACP synthase and acetyl transacylase activities. Its substrate specificity determines the biosynthesis of branched-chain and/or straight-chain of fatty acids. The polypeptide is Beta-ketoacyl-[acyl-carrier-protein] synthase III (Shigella dysenteriae serotype 1 (strain Sd197)).